The chain runs to 680 residues: Methionine--tRNA ligase (680 aa).

A 'HIGH' region motif is present at residues 14 to 24 (PYANGPIHLGH). Cysteine 145, cysteine 148, cysteine 158, and cysteine 161 together coordinate Zn(2+). The 'KMSKS' region motif lies at 330-334 (KMSKS). Lysine 333 lines the ATP pocket. Residues 579–680 (DFAKVDFRIA…DGAQPGMRVK (102 aa)) form the tRNA-binding domain.

The protein belongs to the class-I aminoacyl-tRNA synthetase family. MetG type 1 subfamily. Homodimer. Requires Zn(2+) as cofactor.

It localises to the cytoplasm. It carries out the reaction tRNA(Met) + L-methionine + ATP = L-methionyl-tRNA(Met) + AMP + diphosphate. Its function is as follows. Is required not only for elongation of protein synthesis but also for the initiation of all mRNA translation through initiator tRNA(fMet) aminoacylation. This is Methionine--tRNA ligase from Hydrogenovibrio crunogenus (strain DSM 25203 / XCL-2) (Thiomicrospira crunogena).